A 532-amino-acid chain; its full sequence is Phosphoenolpyruvate carboxykinase (ATP) (532 aa).

Arg60, Tyr194, and Lys200 together coordinate substrate. ATP-binding positions include Lys200, His219, and 237–245; that span reads GLSGTGKTT. Residues Lys200 and His219 each coordinate Mn(2+). Asp258 lines the Mn(2+) pocket. ATP-binding residues include Glu286, Arg324, and Thr449. Position 324 (Arg324) interacts with substrate.

The protein belongs to the phosphoenolpyruvate carboxykinase (ATP) family. It depends on Mn(2+) as a cofactor.

The protein resides in the cytoplasm. It carries out the reaction oxaloacetate + ATP = phosphoenolpyruvate + ADP + CO2. Its pathway is carbohydrate biosynthesis; gluconeogenesis. Its function is as follows. Involved in the gluconeogenesis. Catalyzes the conversion of oxaloacetate (OAA) to phosphoenolpyruvate (PEP) through direct phosphoryl transfer between the nucleoside triphosphate and OAA. The protein is Phosphoenolpyruvate carboxykinase (ATP) of Roseobacter denitrificans (strain ATCC 33942 / OCh 114) (Erythrobacter sp. (strain OCh 114)).